The sequence spans 107 residues: MNDSEFHRLADNLWQTIEARLDDWDGDSDIDCEINGGVLTLSFENGSKIIINRQEPLHQVWLATKQGGYHFNLKGDDWICDRSGEMFWDLLEQAATQQAGEEISFRG.

The protein belongs to the frataxin family.

Functionally, involved in iron-sulfur (Fe-S) cluster assembly. May act as a regulator of Fe-S biogenesis. In Enterobacter sp. (strain 638), this protein is Iron-sulfur cluster assembly protein CyaY.